A 359-amino-acid chain; its full sequence is Protein PAM71-homolog, chloroplastic (359 aa).

Residues 1 to 66 (MKLTSLSKNA…DLLWGKFRVR (66 aa)) constitute a chloroplast transit peptide. Residues 71–102 (GVGSGSYSGGEEDGSQSSSLDQSPATSSESLK) form a disordered region. Residues 85 to 98 (SQSSSLDQSPATSS) are compositionally biased toward low complexity. Helical transmembrane passes span 110–130 (SLSI…ITFV), 149–169 (AFSL…AALL), 177–197 (LVLL…VVIG), 207–227 (FQTT…FFGL), 269–289 (LTNP…AEWG), 311–331 (GAIA…AFLA), and 339–359 (VGYV…FGVF).

It belongs to the GDT1 family.

Its subcellular location is the plastid. It localises to the chloroplast membrane. Functionally, probable chloroplast-localized Mn(2+)/H(+) and/or Ca(2+)/H(+) antiporter regulating Ca(2+), Mn(2+) and pH homeostasis. The polypeptide is Protein PAM71-homolog, chloroplastic (Arabidopsis thaliana (Mouse-ear cress)).